A 395-amino-acid chain; its full sequence is Tubulin-like protein CetZ1 (395 aa).

GTP is bound by residues 10–14 (QAGGK), 110–112 (GTG), Glu-142, Asn-169, and Asn-187.

It belongs to the CetZ family.

The protein localises to the cytoplasm. In terms of biological role, involved in cell shape control. Essential for the development of a rod-shaped cell type required for efficient swimming. The protein is Tubulin-like protein CetZ1 of Haloferax volcanii (strain ATCC 29605 / DSM 3757 / JCM 8879 / NBRC 14742 / NCIMB 2012 / VKM B-1768 / DS2) (Halobacterium volcanii).